The sequence spans 1362 residues: MAYSYTEKKRIRKNFGKLPQVMDAPYLLSIQVDSYRTFLQDGKSPKNREDIGLQAAFRSVFPIESYSGNAALEFVEYSLGKPEFDVRECILRGSTYAAPMRVKIRLIIKDRETKSIKDVREQEVYMGEIPLMTENGTFVINGTERVIVSQLHRSPGVFFDHDKGKTHSSGKVLYSARIIPYRGSWLDFEFDAKDLVYVRIDRRRKLLATVVLRALGYNNEQILNLFYEKVPVYLDMGSYQIDLVPERLRGEMAQFDITDNEGKVIVEQGKRINARHVRQMEAAGLTKLSVPDEYLYERITAEDITLRDGEVIAANTLLSHEVMVKLAEGGVKQFNILFTNDIDRGSFVADTLRADLTRDREEALVEIYKVMRPGEPPTKEAAENLFNNLFFSSERYDLSPVGRMKFNRRLGRPYEVGTDQKSREVEGILSHEDIIDVLRTLVEIRNGKGEVDDIDHLGNRRVRSVGEMTENQFRVGLVRVERAVKERLSQAETDNLSPQDLINAKPVAAAIKEFFGSSQLSQFMDQNNPLSEITHKRRVSALGPGGLTRERAGFEVRDVHQTHYGRVCPIETPEGPNIGLINSLSVYAKANDFGFLETPYRKVVDGRVTDDVEYLSAIEEVGTVIAQADSAVDKDGNLTEEFVSVRHQGEFVRMPPEKVTHMDVSAQQVVSVAASLIPFLEHDDANRALMGSNMQRQAVPTLRADKPLVGTGMEANVARDSGVCVIANRGGVIEYVDASRIVIRVNEDEMVAGEAGVDIYNLIKYTRSNQNTCINQNVIVNLGDKVARGDILADGPSTDMGELALGQNMRVAFMTWNGYNYEDSILLSERVLQEDRLTSIHIQELSCVARDTKLGAEEITADIPNVGEAALSKLDESGIVYIGAEVTAGDILVGKVTPKGETQLTPEEKLLRAIFGEKAADVKDSSLRVPSGTKGTVIDVQVFTRDGLEKDDRALAIEKAQLDSYRKDLKEEYKIFEEAARERVIRLLKGQESNGGGSTKRGDKLSEDLLSGLELVDLLEIQPADEAIAERLTQIQVFLKEKSAEIDEKFAEKKRKLATGDELTTGVLKVVKVYLAVKRRIQPGDKMAGRHGNKGVVSNILPVEDMPHDANGVPVDIVLNPLGVPSRMNVGQILETHLGMAAKGLGDKIEKMLKEQRTVLELREFLDKIYNKVGGEQEDLDSLTDEEILALAGNLRAGVPLATPVFDGAEESQIKDLLELADISRTGQTVLFDGRTGEQFDRPVTVGYMYMLKLNHLVDDKMHARSTGSYSLVTQQPLGGKAQFGGQRFGEMEVWALEAYGAAYTLQEMLTVKSDDVEGRTRIYKNIVDGNHYMDPGMPESFNVLTKEIRSLGINIELKNGD.

The protein belongs to the RNA polymerase beta chain family. As to quaternary structure, the RNAP catalytic core consists of 2 alpha, 1 beta, 1 beta' and 1 omega subunit. When a sigma factor is associated with the core the holoenzyme is formed, which can initiate transcription.

It catalyses the reaction RNA(n) + a ribonucleoside 5'-triphosphate = RNA(n+1) + diphosphate. In terms of biological role, DNA-dependent RNA polymerase catalyzes the transcription of DNA into RNA using the four ribonucleoside triphosphates as substrates. In Acinetobacter baumannii (strain AB307-0294), this protein is DNA-directed RNA polymerase subunit beta.